The chain runs to 291 residues: Nucleotide-binding protein LMHCC_0126 (291 aa).

13 to 20 (GMSGAGKT) is a binding site for ATP. 63–66 (DLRG) contributes to the GTP binding site.

It belongs to the RapZ-like family.

Its function is as follows. Displays ATPase and GTPase activities. This chain is Nucleotide-binding protein LMHCC_0126, found in Listeria monocytogenes serotype 4a (strain HCC23).